A 396-amino-acid polypeptide reads, in one-letter code: CCA-adding enzyme (396 aa).

Residues glycine 27 and arginine 30 each contribute to the ATP site. Glycine 27 and arginine 30 together coordinate CTP. Residues aspartate 40 and aspartate 42 each coordinate Mg(2+). 5 residues coordinate ATP: arginine 111, aspartate 154, arginine 157, arginine 160, and arginine 163. Arginine 111, aspartate 154, arginine 157, arginine 160, and arginine 163 together coordinate CTP.

Belongs to the tRNA nucleotidyltransferase/poly(A) polymerase family. Bacterial CCA-adding enzyme type 3 subfamily. As to quaternary structure, homodimer. It depends on Mg(2+) as a cofactor.

The catalysed reaction is a tRNA precursor + 2 CTP + ATP = a tRNA with a 3' CCA end + 3 diphosphate. The enzyme catalyses a tRNA with a 3' CCA end + 2 CTP + ATP = a tRNA with a 3' CCACCA end + 3 diphosphate. In terms of biological role, catalyzes the addition and repair of the essential 3'-terminal CCA sequence in tRNAs without using a nucleic acid template. Adds these three nucleotides in the order of C, C, and A to the tRNA nucleotide-73, using CTP and ATP as substrates and producing inorganic pyrophosphate. tRNA 3'-terminal CCA addition is required both for tRNA processing and repair. Also involved in tRNA surveillance by mediating tandem CCA addition to generate a CCACCA at the 3' terminus of unstable tRNAs. While stable tRNAs receive only 3'-terminal CCA, unstable tRNAs are marked with CCACCA and rapidly degraded. This chain is CCA-adding enzyme, found in Bacillus velezensis (strain DSM 23117 / BGSC 10A6 / LMG 26770 / FZB42) (Bacillus amyloliquefaciens subsp. plantarum).